Here is a 497-residue protein sequence, read N- to C-terminus: Endoglucanase 17 (497 aa).

An N-terminal signal peptide occupies residues 1 to 21; sequence MAAAGGAVLLLVLATATSVTG. The Nucleophile role is filled by Asp-77. His-406 is a catalytic residue. N-linked (GlcNAc...) asparagine glycosylation occurs at Asn-451. Catalysis depends on residues Asp-458 and Glu-467.

This sequence belongs to the glycosyl hydrolase 9 (cellulase E) family.

The protein localises to the secreted. It catalyses the reaction Endohydrolysis of (1-&gt;4)-beta-D-glucosidic linkages in cellulose, lichenin and cereal beta-D-glucans.. In Oryza sativa subsp. japonica (Rice), this protein is Endoglucanase 17 (GLU13).